A 72-amino-acid polypeptide reads, in one-letter code: Alpha-conotoxin SII (72 aa).

The signal sequence occupies residues 1 to 21 (MGMRMMFTVFLLVVLATTVVS). A propeptide spanning residues 22 to 50 (FPSDRASDGRDDEAKDERSDMHESDRNGR) is cleaved from the precursor. The tract at residues 23–51 (PSDRASDGRDDEAKDERSDMHESDRNGRG) is disordered. Residues 26–49 (RASDGRDDEAKDERSDMHESDRNG) show a composition bias toward basic and acidic residues. 3 cysteine pairs are disulfide-bonded: C52-C68, C53-C58, and C54-C64. A propeptide spanning residues 70–72 (RTL) is cleaved from the precursor.

Belongs to the conotoxin A superfamily. The disulfide bond Cys-52-Cys-68 (Cys I-VI), which corresponds to an extra disulfide bond when compared to the cysteine framework I (CC-C-C), does contribute to conotoxin SII stability and imparts a unique binding mode at the nAChR. In terms of tissue distribution, expressed by the venom duct.

It localises to the secreted. In terms of biological role, alpha-conotoxins act on postsynaptic membranes, they bind to the nicotinic acetylcholine receptors (nAChR) and thus inhibit them. This toxin potently inhibits the rodent muscle nAChR (IC(50)=120 nM (adult subtype, alpha-1-beta-1-delta-epsilon/CHRNA1-CHRNB1-CHRND-CHRNE) and IC(50)=370 nM (fetal subtype, alpha-1-beta-1-gamma-delta/CHRNA1-CHRNB1-CHRNG-CHRND)) and weakly inhibits neuronal nAChRs. In contrast to alpha-conotoxins bearing 2 disulfide bonds (framework I), this conotoxin acts via a unique binding mode with the helix and the N- and C-termini buried in the binding pocket of muscle nAChRs. This Conus striatus (Striated cone) protein is Alpha-conotoxin SII.